Reading from the N-terminus, the 225-residue chain is Small ribosomal subunit protein uS3 (225 aa).

Residues 39-109 (IYRFFNKFTR…ELKLNIEVVN (71 aa)) form the KH type-2 domain.

It belongs to the universal ribosomal protein uS3 family. As to quaternary structure, part of the 30S ribosomal subunit. Forms a tight complex with proteins S10 and S14.

Functionally, binds the lower part of the 30S subunit head. Binds mRNA in the 70S ribosome, positioning it for translation. In Mycoplasma mobile (strain ATCC 43663 / 163K / NCTC 11711) (Mesomycoplasma mobile), this protein is Small ribosomal subunit protein uS3.